The sequence spans 372 residues: MTVLVALFCLVTWTLCTRIPQYSTQGTQQPQQPEKTPHPHPQPEDAFPPTHATDLKIHDPSIIHVDGTYYSYSVGRHIRIHQAPSLDGPWERTGAVLNADSVIPKGDRKAPWAPQTVHHNDTYYCFYAVSNSGCRDSAIGVATSKSPGPGGWTDHGLLVQSGTGKGSDEHPFTSSNTIDPSVFVGEDGHGYLMFGSFWSGIWQVPLDESLLSVAGDTSSEARQLVYMEKAPLPASKHPNPLCREPSGARPIEGSFLSYHEPWYYLWFSYGKCCKFDTKNLPPPGREYSIRVGRSKSPRGPFVDKQGRDLANGGGEIVYASNRDVYAPGGQGVLTEKSGDILYYHYCRYPVIQEIEVDADLTVNKSTSYDFWV.

The first 16 residues, 1–16 (MTVLVALFCLVTWTLC), serve as a signal peptide directing secretion. Residues 23–34 (STQGTQQPQQPE) are compositionally biased toward low complexity. A disordered region spans residues 23-52 (STQGTQQPQQPEKTPHPHPQPEDAFPPTHA). D59 (proton acceptor) is an active-site residue. N120 carries an N-linked (GlcNAc...) asparagine glycan. E252 acts as the Proton donor in catalysis. N-linked (GlcNAc...) asparagine glycosylation occurs at N363.

This sequence belongs to the glycosyl hydrolase 43 family.

The protein resides in the secreted. It carries out the reaction Endohydrolysis of (1-&gt;5)-alpha-arabinofuranosidic linkages in (1-&gt;5)-arabinans.. The protein operates within glycan metabolism; L-arabinan degradation. Functionally, endo-1,5-alpha-L-arabinanase involved in degradation of pectin. Its preferred substrate is linear 1,5-alpha-L-arabinan. The protein is Probable arabinan endo-1,5-alpha-L-arabinosidase B (abnB) of Aspergillus fumigatus (strain CBS 144.89 / FGSC A1163 / CEA10) (Neosartorya fumigata).